Reading from the N-terminus, the 142-residue chain is Multiprotein-bridging factor 1a (142 aa).

The segment covering 51-64 (GTNKAASSGTSLNT) has biased composition (polar residues). A disordered region spans residues 51 to 77 (GTNKAASSGTSLNTKMLDDDTENLTHE). Residues 87–141 (IMQARTDKKLTQSQLAQIINEKPQVIQEYESGKAIPNQQILSKLERALGAKLRGK) form the HTH cro/C1-type domain. The segment at residues 98 to 117 (QSQLAQIINEKPQVIQEYES) is a DNA-binding region (H-T-H motif).

This sequence belongs to the MBF1 family. In terms of tissue distribution, expressed in leaves, roots, stems, flowers, siliques and shoots. Detected only in anthers and some seeds in siliques.

The protein localises to the nucleus. The protein resides in the nucleolus. In terms of biological role, transcriptional coactivator that stimulates transcriptional activity by bridging regulatory proteins and TBP, thereby recruiting TBP to promoters occupied by DNA-binding regulators. The chain is Multiprotein-bridging factor 1a (MBF1A) from Arabidopsis thaliana (Mouse-ear cress).